The primary structure comprises 496 residues: Catalase-A (496 aa).

Active-site residues include histidine 54 and asparagine 128. Tyrosine 338 is a binding site for heme. Positions 494–496 match the Microbody targeting signal motif; it reads SNL.

The protein belongs to the catalase family. The cofactor is heme.

It is found in the peroxisome matrix. The enzyme catalyses 2 H2O2 = O2 + 2 H2O. Functionally, catalyzes the degradation of hydrogen peroxide (H(2)O(2)) generated by peroxisomal oxidases to water and oxygen, thereby protecting cells from the toxic effects of hydrogen peroxide. This chain is Catalase-A (catA), found in Dictyostelium discoideum (Social amoeba).